We begin with the raw amino-acid sequence, 140 residues long: Translation initiation factor 2 subunit beta (140 aa).

It belongs to the eIF-2-beta/eIF-5 family. Heterotrimer composed of an alpha, a beta and a gamma chain.

In terms of biological role, eIF-2 functions in the early steps of protein synthesis by forming a ternary complex with GTP and initiator tRNA. This Metallosphaera sedula (strain ATCC 51363 / DSM 5348 / JCM 9185 / NBRC 15509 / TH2) protein is Translation initiation factor 2 subunit beta.